Consider the following 280-residue polypeptide: 4-diphosphocytidyl-2-C-methyl-D-erythritol kinase (280 aa).

Residue Lys11 is part of the active site. 95-105 provides a ligand contact to ATP; the sequence is PVAAGLGGGSS. Residue Asp137 is part of the active site.

It belongs to the GHMP kinase family. IspE subfamily.

It catalyses the reaction 4-CDP-2-C-methyl-D-erythritol + ATP = 4-CDP-2-C-methyl-D-erythritol 2-phosphate + ADP + H(+). Its pathway is isoprenoid biosynthesis; isopentenyl diphosphate biosynthesis via DXP pathway; isopentenyl diphosphate from 1-deoxy-D-xylulose 5-phosphate: step 3/6. Catalyzes the phosphorylation of the position 2 hydroxy group of 4-diphosphocytidyl-2C-methyl-D-erythritol. This is 4-diphosphocytidyl-2-C-methyl-D-erythritol kinase from Pelobacter propionicus (strain DSM 2379 / NBRC 103807 / OttBd1).